Here is a 335-residue protein sequence, read N- to C-terminus: uncharacterized protein (335 aa).

Disordered stretches follow at residues 152–179 and 252–271; these read IQLPDRMPKTTNGTLADPNMPPKTTVND and LDLFGSPSSENKSTAGSASL. Residues serine 257 and serine 260 each carry the phosphoserine modification. The span at 257–271 shows a compositional bias: polar residues; that stretch reads SPSSENKSTAGSASL.

This is an uncharacterized protein from Schizosaccharomyces pombe (strain 972 / ATCC 24843) (Fission yeast).